The sequence spans 711 residues: Ribosomal RNA large subunit methyltransferase K/L (711 aa).

Residues 43-154 (LAYRITLWTR…NGVITIAMNF (112 aa)) enclose the THUMP domain.

It belongs to the methyltransferase superfamily. RlmKL family.

Its subcellular location is the cytoplasm. The enzyme catalyses guanosine(2445) in 23S rRNA + S-adenosyl-L-methionine = N(2)-methylguanosine(2445) in 23S rRNA + S-adenosyl-L-homocysteine + H(+). It carries out the reaction guanosine(2069) in 23S rRNA + S-adenosyl-L-methionine = N(2)-methylguanosine(2069) in 23S rRNA + S-adenosyl-L-homocysteine + H(+). Specifically methylates the guanine in position 2445 (m2G2445) and the guanine in position 2069 (m7G2069) of 23S rRNA. The chain is Ribosomal RNA large subunit methyltransferase K/L from Shewanella oneidensis (strain ATCC 700550 / JCM 31522 / CIP 106686 / LMG 19005 / NCIMB 14063 / MR-1).